Consider the following 29-residue polypeptide: Dermaseptin-1.2TR (29 aa).

Valine amide is present on Val29.

As to expression, expressed by the skin glands.

Its subcellular location is the secreted. Functionally, has antimicrobial activity. In Phyllomedusa trinitatis (Trinidad leaf frog), this protein is Dermaseptin-1.2TR.